The sequence spans 189 residues: UPF0301 protein CTA_0231 (189 aa).

Belongs to the UPF0301 (AlgH) family.

This is UPF0301 protein CTA_0231 from Chlamydia trachomatis serovar A (strain ATCC VR-571B / DSM 19440 / HAR-13).